A 525-amino-acid polypeptide reads, in one-letter code: MSNENEKSIVEYFYIGERVKGDDGSVGTIRYQGKVDGFEGNWYGIEWDDPKRGKHQGTVKGKQYFKCINKGSGSFMKYEKLIKGETFMKSISDKFHQKIDNYDDLYVDSTKEDIKIQIQMIGMNQTRENQKKFIAQTLLSASYLPISEIDESPLIYNNFKNLIELNLSNCLLNSWTQIVKLLKQLPNLNRLHLCNNRLSFNIDEFKKEVNSNNEYGNSIDDCNVKDLILVNSNLSNWSIVSSICKYLFKNIESICLSSNSIENINLFKSILNNDNENENENENEIVEQQQQQQPQYLFPTLKSLDLANNNIKSFNDILSSLGNLPQLTELNLNNNQITDIEFNGDVDDGNKSNNGKTNQFKNLKRIYLSNNKINDWKYLDKLDELQSLDELSFRNNPIVDSLLISNSNNSNTNENEIENDIENNNNNIKKDNNNNNKNNKNNKNNKTIFLNRLNIIPRLSNLKKLNLSDITLLERKDAELYFLYENYNSIDKFKNNKKLNYLISIHGEPVYTKMSLQLEKEENGK.

Positions 33 to 77 (GKVDGFEGNWYGIEWDDPKRGKHQGTVKGKQYFKCINKGSGSFMK) constitute a CAP-Gly domain. 3 LRR repeats span residues 300-321 (TLKSLDLANNNIKSFNDILSSL), 326-347 (QLTELNLNNNQITDIEFNGDVD), and 362-383 (NLKRIYLSNNKINDWKYLDKLD). Residues 414-444 (ENEIENDIENNNNNIKKDNNNNNKNNKNNKN) are disordered. Positions 422–444 (ENNNNNIKKDNNNNNKNNKNNKN) are enriched in low complexity. The LRRCT domain occupies 441–481 (NNKNNKTIFLNRLNIIPRLSNLKKLNLSDITLLERKDAELY).

It belongs to the TBCE family. In terms of assembly, supercomplex made of cofactors A to E. Cofactors A and D function by capturing and stabilizing tubulin in a quasi-native conformation. Cofactor E binds to the cofactor D-tubulin complex; interaction with cofactor C then causes the release of tubulin polypeptides that are committed to the native state.

Its subcellular location is the cytoplasm. It localises to the cytoskeleton. Tubulin-folding protein; involved in the second step of the tubulin folding pathway. The chain is Tubulin-specific chaperone E (tbce) from Dictyostelium discoideum (Social amoeba).